The primary structure comprises 928 residues: Probable outer membrane protein pmp11 (928 aa).

Residues 1-24 (MKTSIPWVLVSSVLAFSCHLQSLA) form the signal peptide. An Autotransporter domain is found at 627–928 (GMEHKQGFWV…NVDVGTKLRF (302 aa)).

It belongs to the PMP outer membrane protein family.

Its subcellular location is the secreted. It is found in the cell wall. The protein localises to the cell outer membrane. This Chlamydia pneumoniae (Chlamydophila pneumoniae) protein is Probable outer membrane protein pmp11 (pmp11).